The sequence spans 542 residues: Peptide chain release factor 3 (542 aa).

In terms of domain architecture, tr-type G spans 14-283 (DKRRNFAIIS…AFLEYALKPG (270 aa)). GTP contacts are provided by residues 23 to 30 (SHPDAGKT), 91 to 95 (DTPGH), and 145 to 148 (NKMD).

Belongs to the TRAFAC class translation factor GTPase superfamily. Classic translation factor GTPase family. PrfC subfamily.

It is found in the cytoplasm. Increases the formation of ribosomal termination complexes and stimulates activities of RF-1 and RF-2. It binds guanine nucleotides and has strong preference for UGA stop codons. It may interact directly with the ribosome. The stimulation of RF-1 and RF-2 is significantly reduced by GTP and GDP, but not by GMP. The polypeptide is Peptide chain release factor 3 (Trichodesmium erythraeum (strain IMS101)).